The chain runs to 82 residues: Large ribosomal subunit protein uL23 (82 aa).

The protein belongs to the universal ribosomal protein uL23 family. As to quaternary structure, part of the 50S ribosomal subunit. Contacts protein L29.

In terms of biological role, binds to 23S rRNA. One of the proteins that surrounds the polypeptide exit tunnel on the outside of the ribosome. This chain is Large ribosomal subunit protein uL23, found in Methanospirillum hungatei JF-1 (strain ATCC 27890 / DSM 864 / NBRC 100397 / JF-1).